A 245-amino-acid chain; its full sequence is 1-(5-phosphoribosyl)-5-[(5-phosphoribosylamino)methylideneamino] imidazole-4-carboxamide isomerase (245 aa).

Aspartate 8 acts as the Proton acceptor in catalysis. The Proton donor role is filled by aspartate 130.

It belongs to the HisA/HisF family.

Its subcellular location is the cytoplasm. The enzyme catalyses 1-(5-phospho-beta-D-ribosyl)-5-[(5-phospho-beta-D-ribosylamino)methylideneamino]imidazole-4-carboxamide = 5-[(5-phospho-1-deoxy-D-ribulos-1-ylimino)methylamino]-1-(5-phospho-beta-D-ribosyl)imidazole-4-carboxamide. It functions in the pathway amino-acid biosynthesis; L-histidine biosynthesis; L-histidine from 5-phospho-alpha-D-ribose 1-diphosphate: step 4/9. The polypeptide is 1-(5-phosphoribosyl)-5-[(5-phosphoribosylamino)methylideneamino] imidazole-4-carboxamide isomerase (Pseudomonas fluorescens (strain Pf0-1)).